The primary structure comprises 489 residues: Rhamnulokinase (489 aa).

13-17 (ASSGR) is an ATP binding site. Cysteines 68 and 222 form a disulfide. Substrate is bound by residues Gly-83 and 236 to 238 (HDT). The active-site Proton acceptor is Asp-237. Thr-259 is a binding site for ATP. Residue Asn-296 coordinates substrate. An ATP-binding site is contributed by Gln-304. An intrachain disulfide couples Cys-353 to Cys-370. Gly-402 lines the ATP pocket. Cys-413 and Cys-417 are disulfide-bonded.

Belongs to the rhamnulokinase family. It depends on Mg(2+) as a cofactor.

The enzyme catalyses L-rhamnulose + ATP = L-rhamnulose 1-phosphate + ADP + H(+). It functions in the pathway carbohydrate degradation; L-rhamnose degradation; glycerone phosphate from L-rhamnose: step 2/3. Its function is as follows. Involved in the catabolism of L-rhamnose (6-deoxy-L-mannose). Catalyzes the transfer of the gamma-phosphate group from ATP to the 1-hydroxyl group of L-rhamnulose to yield L-rhamnulose 1-phosphate. The protein is Rhamnulokinase of Salmonella choleraesuis (strain SC-B67).